Consider the following 320-residue polypeptide: Cytochrome c biogenesis protein CcsA (320 aa).

8 consecutive transmembrane segments (helical) span residues 14 to 34, 37 to 57, 68 to 88, 97 to 117, 143 to 163, 228 to 248, 263 to 283, and 289 to 309; these read SFFLLFFVTFIYWGKFLYINI, ITILGEISMKIACFFITTFLL, LSNLYESSMFLSWSFTLIHLI, WLGIITAPSAMLTHGFATLSL, MMLSYSTLLCGSLLAITILII, VISLGFPLLTIGILSGAVWAN, WALITWLIFAIYLHTRMIKGW, and AIIASLGFFIVWICYLGVNLL.

It belongs to the CcmF/CycK/Ccl1/NrfE/CcsA family. In terms of assembly, may interact with Ccs1.

The protein resides in the plastid. Its subcellular location is the chloroplast thylakoid membrane. In terms of biological role, required during biogenesis of c-type cytochromes (cytochrome c6 and cytochrome f) at the step of heme attachment. The sequence is that of Cytochrome c biogenesis protein CcsA from Marchantia polymorpha (Common liverwort).